A 102-amino-acid chain; its full sequence is NADH-quinone oxidoreductase subunit K (102 aa).

3 helical membrane passes run 6-26 (LIAM…GVLA), 30-50 (IMFQ…GFVA), and 63-83 (MFIL…ALFL).

Belongs to the complex I subunit 4L family. NDH-1 is composed of 14 different subunits. Subunits NuoA, H, J, K, L, M, N constitute the membrane sector of the complex.

The protein resides in the cell inner membrane. It carries out the reaction a quinone + NADH + 5 H(+)(in) = a quinol + NAD(+) + 4 H(+)(out). Functionally, NDH-1 shuttles electrons from NADH, via FMN and iron-sulfur (Fe-S) centers, to quinones in the respiratory chain. The immediate electron acceptor for the enzyme in this species is believed to be ubiquinone. Couples the redox reaction to proton translocation (for every two electrons transferred, four hydrogen ions are translocated across the cytoplasmic membrane), and thus conserves the redox energy in a proton gradient. The protein is NADH-quinone oxidoreductase subunit K of Rhodopseudomonas palustris (strain BisB5).